A 119-amino-acid polypeptide reads, in one-letter code: Cytochrome c55X (119 aa).

An N-terminal signal peptide occupies residues methionine 1 to alanine 20. 3 residues coordinate heme c: cysteine 51, cysteine 54, and histidine 55.

In terms of processing, binds 1 heme c group covalently per subunit.

It localises to the periplasm. Functionally, monoheme c-type cytochrome. The protein is Cytochrome c55X (nirC) of Pseudomonas aeruginosa (strain ATCC 15692 / DSM 22644 / CIP 104116 / JCM 14847 / LMG 12228 / 1C / PRS 101 / PAO1).